An 87-amino-acid chain; its full sequence is MKTKLNELLEFPTSFTYKVMGQALPELVDQVVEVVQRHAPGDYSPTVKPSSKGNYHSVSITITATHIEQVETLYEELGNIDIVRMVL.

This sequence belongs to the UPF0250 family.

This chain is UPF0250 protein Ent638_1166, found in Enterobacter sp. (strain 638).